Reading from the N-terminus, the 214-residue chain is Outer-membrane lipoprotein LolB (214 aa).

An N-terminal signal peptide occupies residues 1–25; sequence MNNLKRLTKTIFSCFTLSALLLLAG. Residue C26 is the site of N-palmitoyl cysteine attachment. Residue C26 is the site of S-diacylglycerol cysteine attachment. The span at 143-160 shows a compositional bias: polar residues; the sequence is QVIESDSQGKPKQLTNTQ. Residues 143 to 163 form a disordered region; the sequence is QVIESDSQGKPKQLTNTQTPP.

This sequence belongs to the LolB family. As to quaternary structure, monomer.

Its subcellular location is the cell outer membrane. Its function is as follows. Plays a critical role in the incorporation of lipoproteins in the outer membrane after they are released by the LolA protein. This is Outer-membrane lipoprotein LolB from Shewanella baltica (strain OS223).